Reading from the N-terminus, the 496-residue chain is Apolipoprotein N-acyltransferase (496 aa).

The next 6 helical transmembrane spans lie at 6-26 (IICF…FFIP), 50-70 (FGYL…SIGV), 77-97 (FWWA…FFIS), 114-134 (LIFC…CTGL), 148-168 (ILIQ…VIYI), and 183-203 (LKIL…YGAM). One can recognise a CN hydrolase domain in the interval 220–464 (VQPSIPQTAK…QGLIPQKLTT (245 aa)). The Proton acceptor role is filled by Glu259. Lys322 is an active-site residue. Cys372 acts as the Nucleophile in catalysis. The chain crosses the membrane as a helical span at residues 474–494 (FAMLLPIVFILLIHYLLSLIF).

Belongs to the CN hydrolase family. Apolipoprotein N-acyltransferase subfamily.

The protein resides in the cell inner membrane. The enzyme catalyses N-terminal S-1,2-diacyl-sn-glyceryl-L-cysteinyl-[lipoprotein] + a glycerophospholipid = N-acyl-S-1,2-diacyl-sn-glyceryl-L-cysteinyl-[lipoprotein] + a 2-acyl-sn-glycero-3-phospholipid + H(+). It participates in protein modification; lipoprotein biosynthesis (N-acyl transfer). Its function is as follows. Catalyzes the phospholipid dependent N-acylation of the N-terminal cysteine of apolipoprotein, the last step in lipoprotein maturation. In Rickettsia typhi (strain ATCC VR-144 / Wilmington), this protein is Apolipoprotein N-acyltransferase.